Reading from the N-terminus, the 98-residue chain is Acylphosphatase (98 aa).

The region spanning 12 to 98 (TYYVRVRGVV…EKRFERFQQQ (87 aa)) is the Acylphosphatase-like domain. Residues Arg27 and Asn45 contribute to the active site.

The protein belongs to the acylphosphatase family.

It carries out the reaction an acyl phosphate + H2O = a carboxylate + phosphate + H(+). The polypeptide is Acylphosphatase (acyP) (Burkholderia cenocepacia (strain HI2424)).